Consider the following 335-residue polypeptide: Nucleotide-binding protein CYA_0911 (335 aa).

Residue 20–27 participates in ATP binding; it reads GLTGSGKT. The segment at 306 to 335 is disordered; that stretch reads ARFGPPPPAAGVEQQQVRIPLAGVPAPPHD.

Belongs to the RapZ-like family.

Functionally, displays ATPase and GTPase activities. The polypeptide is Nucleotide-binding protein CYA_0911 (Synechococcus sp. (strain JA-3-3Ab) (Cyanobacteria bacterium Yellowstone A-Prime)).